The following is a 163-amino-acid chain: ATP synthase subunit b (163 aa).

Residues 1–11 (MLWKANVWVLG) constitute a propeptide that is removed on maturation. The helical transmembrane segment at 16–36 (GISGGTIIYQLLMFIILLALL) threads the bilayer.

It belongs to the ATPase B chain family. As to quaternary structure, F-type ATPases have 2 components, F(1) - the catalytic core - and F(0) - the membrane proton channel. F(1) has five subunits: alpha(3), beta(3), gamma(1), delta(1), epsilon(1). F(0) has three main subunits: a(1), b(2) and c(10-14). The alpha and beta chains form an alternating ring which encloses part of the gamma chain. F(1) is attached to F(0) by a central stalk formed by the gamma and epsilon chains, while a peripheral stalk is formed by the delta and b chains.

The protein localises to the cell membrane. Its function is as follows. F(1)F(0) ATP synthase produces ATP from ADP in the presence of a proton or sodium gradient. F-type ATPases consist of two structural domains, F(1) containing the extramembraneous catalytic core and F(0) containing the membrane proton channel, linked together by a central stalk and a peripheral stalk. During catalysis, ATP synthesis in the catalytic domain of F(1) is coupled via a rotary mechanism of the central stalk subunits to proton translocation. Component of the F(0) channel, it forms part of the peripheral stalk, linking F(1) to F(0). This is ATP synthase subunit b from Bacillus sp. (strain PS3).